Here is a 430-residue protein sequence, read N- to C-terminus: MILIKNAQIINSLHDKVEKADILIVDDKIKKIGKDIEENPEKMTIIDASGKVVMPSFTDIHCHLREPGFEYKEDIKSGSRSAAAGGFTTICCMPNTNPPVDNRAMVAYIKYRAREVSPIEVLPVGAITKGLLGEELAEIGFMKEEGAIAISDDGKCVMNANLMKNALLYSRDFSIPVISHCEDTNLSEGGQINLGYVSTITGLRGIPREAESVIIARDILLAKETKSHLHITHVSTKESVRLIKMAKEWGVNVTADTCPHYISLTEEEVLGFNTNAKVNPPLRTQEDVEALIEGLKEGVIDCISTDHAPHHKDEKNVEFNLAASGTIGFETAFSVLFTYLVEKNGFDIGKIVELLNHNPRKIIGLSPNVLKEGEKANLVIVDLKKKWEVKEENIVSKSKNSVFLGKLLTSYVETVIYNGKILKKDGVLNC.

Residues H61 and H63 each coordinate Zn(2+). Residues 63-65 (HLR) and N95 each bind substrate. Zn(2+)-binding residues include D153, H180, and H233. A substrate-binding site is contributed by N279. D306 serves as a coordination point for Zn(2+). Residue D306 is part of the active site. H310 serves as a coordination point for substrate.

The protein belongs to the metallo-dependent hydrolases superfamily. DHOase family. Class I DHOase subfamily. It depends on Zn(2+) as a cofactor.

It carries out the reaction (S)-dihydroorotate + H2O = N-carbamoyl-L-aspartate + H(+). It participates in pyrimidine metabolism; UMP biosynthesis via de novo pathway; (S)-dihydroorotate from bicarbonate: step 3/3. In terms of biological role, catalyzes the reversible cyclization of carbamoyl aspartate to dihydroorotate. This Caldicellulosiruptor saccharolyticus (strain ATCC 43494 / DSM 8903 / Tp8T 6331) protein is Dihydroorotase.